The sequence spans 483 residues: V-type proton ATPase subunit H (483 aa).

Position 483 is a phosphoserine (S483).

This sequence belongs to the V-ATPase H subunit family. V-ATPase is a heteromultimeric enzyme made up of two complexes: the ATP-hydrolytic V1 complex and the proton translocation V0 complex. The V1 complex consists of three catalytic AB heterodimers that form a heterohexamer, three peripheral stalks each consisting of EG heterodimers, one central rotor including subunits D and F, and the regulatory subunits C and H. The proton translocation complex V0 consists of the proton transport subunit a, a ring of proteolipid subunits c9c'', rotary subunit d, subunits e and f, and the accessory subunits ATP6AP1/Ac45 and ATP6AP2/PRR. Interacts with AP2M1. As to expression, expressed in brain (at protein level).

Its subcellular location is the cytoplasmic vesicle. It localises to the clathrin-coated vesicle membrane. In terms of biological role, subunit of the V1 complex of vacuolar(H+)-ATPase (V-ATPase), a multisubunit enzyme composed of a peripheral complex (V1) that hydrolyzes ATP and a membrane integral complex (V0) that translocates protons. V-ATPase is responsible for acidifying and maintaining the pH of intracellular compartments and in some cell types, is targeted to the plasma membrane, where it is responsible for acidifying the extracellular environment. Subunit H is essential for V-ATPase activity, but not for the assembly of the complex. Involved in the endocytosis mediated by clathrin-coated pits, required for the formation of endosomes. The polypeptide is V-type proton ATPase subunit H (ATP6V1H) (Bos taurus (Bovine)).